Reading from the N-terminus, the 429-residue chain is Ribosomal RNA small subunit methyltransferase B (429 aa).

Residues 254-260 (CAAPGGK), Asp-277, Asp-303, and Asp-322 contribute to the S-adenosyl-L-methionine site. Cys-375 serves as the catalytic Nucleophile.

It belongs to the class I-like SAM-binding methyltransferase superfamily. RsmB/NOP family.

The protein resides in the cytoplasm. The enzyme catalyses cytidine(967) in 16S rRNA + S-adenosyl-L-methionine = 5-methylcytidine(967) in 16S rRNA + S-adenosyl-L-homocysteine + H(+). Its function is as follows. Specifically methylates the cytosine at position 967 (m5C967) of 16S rRNA. The chain is Ribosomal RNA small subunit methyltransferase B from Serratia proteamaculans (strain 568).